The following is a 57-amino-acid chain: UPF0434 protein Spea_1772 (57 aa).

It belongs to the UPF0434 family.

The polypeptide is UPF0434 protein Spea_1772 (Shewanella pealeana (strain ATCC 700345 / ANG-SQ1)).